The chain runs to 141 residues: Small ribosomal subunit protein uS12 (141 aa).

The protein belongs to the universal ribosomal protein uS12 family. In terms of assembly, part of the 30S ribosomal subunit.

In terms of biological role, with S4 and S5 plays an important role in translational accuracy. Located at the interface of the 30S and 50S subunits. This Methanosphaera stadtmanae (strain ATCC 43021 / DSM 3091 / JCM 11832 / MCB-3) protein is Small ribosomal subunit protein uS12.